Here is a 505-residue protein sequence, read N- to C-terminus: MTSKPHSDWIPYSVLDDEGSNLRQQKLDRQRALLEQKQKKKRQEPLMVQANADGRPRSRRARQSEEQAPLVESYLSSSGSTSYQVQEADSLASVQPGATRPPAPASAKKTKGAAASGGQGGAPRKEKKGKHKGTSGPATLAEDKSEAQGPVQILTVGQSDHAKDAGETAAGGGAQPSGQDLRATMQRKGISSSMSFDEEEDEDENSSSSSQLNSNTRPSSATSRKSTREAASAPSPAAPEPPVDIEVQDLEEFALRPAPQGITIKCRITRDKKGMDRGMYPTYFLHLDREDGKKVFLLAGRKRKKSKTSNYLISVDPTDLSRGGDSYIGKLRSNLMGTKFTVYDNGVNPQKASSSTLESGTLRQELAAVCYETNVLGFKGPRKMSVIVPGMNMVHERVCIRPRNEHETLLARWQNKNTESIIELQNKTPVWNDDTQSYVLNFHGRVTQASVKNFQIIHGNDPDYIVMQFGRVAEDVFTMDYNYPLCALQAFAIALSSFDSKLACE.

The segment at 35-243 (EQKQKKKRQE…PSPAAPEPPV (209 aa)) is disordered. The span at 70–87 (LVESYLSSSGSTSYQVQE) shows a compositional bias: low complexity. A compositionally biased stretch (acidic residues) spans 196 to 205 (FDEEEDEDEN). Over residues 206–220 (SSSSSQLNSNTRPSS) the composition is skewed to low complexity.

Belongs to the TUB family. As to quaternary structure, interacts with GNAQ. Interacts with TULP1.

It is found in the cytoplasm. Its subcellular location is the nucleus. The protein resides in the secreted. It localises to the cell membrane. Functionally, functions in signal transduction from heterotrimeric G protein-coupled receptors. Binds to membranes containing phosphatidylinositol 4,5-bisphosphate. Can bind DNA (in vitro). May contribute to the regulation of transcription in the nucleus. Could be involved in the hypothalamic regulation of body weight. Contribute to stimulation of phagocytosis of apoptotic retinal pigment epithelium (RPE) cells and macrophages. The chain is Tubby protein homolog (Tub) from Rattus norvegicus (Rat).